The following is a 377-amino-acid chain: Rhodopsin, long-wavelength (377 aa).

The Extracellular segment spans residues 1–51 (MIAVSGPSYEAFSYGGQARFNNQTVVDKVPPDMLHLIDANWYQYPPLNPMW). N22 is a glycosylation site (N-linked (GlcNAc...) asparagine). A helical membrane pass occupies residues 52–76 (HGILGFVIGMLGFVSAMGNGMVVYI). At 77–88 (FLSTKSLRTPSN) the chain is on the cytoplasmic side. The chain crosses the membrane as a helical span at residues 89–113 (LFVINLAISNFLMMFCMSPPMVINC). Residues 114–128 (YYETWVLGPLFCQIY) lie on the Extracellular side of the membrane. A disulfide bridge links C125 with C202. A helical membrane pass occupies residues 129-148 (AMLGSLFGCGSIWTMTMIAF). The Cytoplasmic segment spans residues 149-167 (DRYNVIVKGLSGKPLSING). A helical membrane pass occupies residues 168–191 (ALIRIIAIWLFSLGWTIAPMFGWN). Topologically, residues 192-215 (RYVPEGNMTACGTDYFNRGLLSAS) are extracellular. The N-linked (GlcNAc...) asparagine glycan is linked to N198. The chain crosses the membrane as a helical span at residues 216 to 243 (YLVCYGIWVYFVPLFLIIYSYWFIIQAV). Residues 244–278 (AAHEKNMREQAKKMNVASLRSSENQNTSAECKLAK) are Cytoplasmic-facing. The chain crosses the membrane as a helical span at residues 279–302 (VALMTISLWFMAWTPYLVINFSGI). Residues 303-309 (FNLVKIS) are Extracellular-facing. The helical transmembrane segment at 310–334 (PLFTIWGSLFAKANAVYNPIVYGIS) threads the bilayer. K321 is subject to N6-(retinylidene)lysine. Residues 335–377 (HPKYRAALFAKFPSLACAAEPSSDAVSTTSGTTTVTDNEKSNA) are Cytoplasmic-facing. The span at 357–370 (SDAVSTTSGTTTVT) shows a compositional bias: low complexity. The disordered stretch occupies residues 357-377 (SDAVSTTSGTTTVTDNEKSNA).

It belongs to the G-protein coupled receptor 1 family. Opsin subfamily. In terms of processing, phosphorylated on some or all of the serine and threonine residues present in the C-terminal region.

It is found in the membrane. Functionally, visual pigments are the light-absorbing molecules that mediate vision. They consist of an apoprotein, opsin, covalently linked to 11-cis-retinal. This is Rhodopsin, long-wavelength from Apis mellifera (Honeybee).